A 709-amino-acid chain; its full sequence is RxLR effector protein PITG_15110 (709 aa).

The signal sequence occupies residues 1–18; that stretch reads MHAYSAAVLMGLLMVAEG. The RxLR-dEER motif lies at 51–66; sequence RLLREPETTEASNEDR.

The protein belongs to the RxLR effector family.

The protein localises to the secreted. Its subcellular location is the host cytoplasm. It is found in the host cytoskeleton. Effector that enhances P.infestans colonization of Nicotiana benthamiana leaves. The polypeptide is RxLR effector protein PITG_15110 (Phytophthora infestans (strain T30-4) (Potato late blight agent)).